The primary structure comprises 284 residues: Phosphoribosylaminoimidazole-succinocarboxamide synthase (284 aa).

This sequence belongs to the SAICAR synthetase family.

The catalysed reaction is 5-amino-1-(5-phospho-D-ribosyl)imidazole-4-carboxylate + L-aspartate + ATP = (2S)-2-[5-amino-1-(5-phospho-beta-D-ribosyl)imidazole-4-carboxamido]succinate + ADP + phosphate + 2 H(+). It functions in the pathway purine metabolism; IMP biosynthesis via de novo pathway; 5-amino-1-(5-phospho-D-ribosyl)imidazole-4-carboxamide from 5-amino-1-(5-phospho-D-ribosyl)imidazole-4-carboxylate: step 1/2. This is Phosphoribosylaminoimidazole-succinocarboxamide synthase from Chromobacterium violaceum (strain ATCC 12472 / DSM 30191 / JCM 1249 / CCUG 213 / NBRC 12614 / NCIMB 9131 / NCTC 9757 / MK).